Reading from the N-terminus, the 139-residue chain is uncharacterized protein (139 aa).

The 55-residue stretch at 19–73 folds into the HTH cro/C1-type domain; it reads IRLRRTMLGMSQEKLGESLGITFQQIQKYEKGTNRVGASRLQNISQILNVPVSFF. A DNA-binding region (H-T-H motif) is located at residues 30-49; that stretch reads QEKLGESLGITFQQIQKYEK.

This is an uncharacterized protein from Rhizobium meliloti (strain 1021) (Ensifer meliloti).